Here is a 191-residue protein sequence, read N- to C-terminus: Holliday junction branch migration complex subunit RuvA (191 aa).

The interval 1 to 63 (MIRYLRGLVL…EEGLSLYGFP (63 aa)) is domain I. Residues 64–136 (DEENLALFEL…LKGKVPPHLL (73 aa)) form a domain II region. Positions 136-140 (LAGEK) are flexible linker. A domain III region spans residues 141–191 (VESEAAEEAVMALAALGFKEAQARAVVLDLLAQNPKARAQDLIKEALKRLR).

It belongs to the RuvA family. As to quaternary structure, homotetramer. Forms an RuvA(8)-RuvB(12)-Holliday junction (HJ) complex. HJ DNA is sandwiched between 2 RuvA tetramers; dsDNA enters through RuvA and exits via RuvB. An RuvB hexamer assembles on each DNA strand where it exits the tetramer. Each RuvB hexamer is contacted by two RuvA subunits (via domain III) on 2 adjacent RuvB subunits; this complex drives branch migration. In the full resolvosome a probable DNA-RuvA(4)-RuvB(12)-RuvC(2) complex forms which resolves the HJ.

It is found in the cytoplasm. The RuvA-RuvB-RuvC complex processes Holliday junction (HJ) DNA during genetic recombination and DNA repair, while the RuvA-RuvB complex plays an important role in the rescue of blocked DNA replication forks via replication fork reversal (RFR). RuvA specifically binds to HJ cruciform DNA, conferring on it an open structure. The RuvB hexamer acts as an ATP-dependent pump, pulling dsDNA into and through the RuvAB complex. HJ branch migration allows RuvC to scan DNA until it finds its consensus sequence, where it cleaves and resolves the cruciform DNA. This chain is Holliday junction branch migration complex subunit RuvA, found in Thermus thermophilus (strain ATCC BAA-163 / DSM 7039 / HB27).